The following is a 381-amino-acid chain: Spindlin interactor and repressor of chromatin-binding protein (381 aa).

Residues 42–73 form a disordered region; sequence RVTQQEKTPPPRPSPLEAGSDGCEEPKQQVSW. Lys48 participates in a covalent cross-link: Glycyl lysine isopeptide (Lys-Gly) (interchain with G-Cter in SUMO2). A phosphoserine mark is found at Ser121 and Ser148. Disordered regions lie at residues 144 to 264, 283 to 320, and 339 to 381; these read AEQP…EVRH, QLRG…LRGT, and LQDW…GNGV. Residues Lys189 and Lys220 each participate in a glycyl lysine isopeptide (Lys-Gly) (interchain with G-Cter in SUMO2) cross-link. Residues 218-228 show a composition bias toward basic and acidic residues; the sequence is RWKEPPGEEPV. 2 positions are modified to phosphoserine: Ser248 and Ser251. Residues 287–299 are compositionally biased toward basic and acidic residues; sequence PDSKDSPKDREVA. Residues Lys290 and Lys294 each participate in a glycyl lysine isopeptide (Lys-Gly) (interchain with G-Cter in SUMO2) cross-link. Ser308 and Ser310 each carry phosphoserine. Lys374 is covalently cross-linked (Glycyl lysine isopeptide (Lys-Gly) (interchain with G-Cter in SUMO2)).

In terms of assembly, interacts with SPIN1, SPIN2A, SPIN2B, SPIN3 and SPIN4. Interacts with TCF7L2 in a SPIN1-dependent manner. Interacts with PARP1; promoting PARP1 ADP-ribosyltransferase activity.

The protein resides in the nucleus. Its subcellular location is the chromosome. Its function is as follows. Chromatin protein that stabilizes SPIN1 and enhances its association with histone H3 trimethylated at both 'Lys-4' and 'Lys-9' (H3K4me3K9me3). Positively regulates poly-ADP-ribosylation in response to DNA damage; acts by facilitating PARP1 ADP-ribosyltransferase activity. This Homo sapiens (Human) protein is Spindlin interactor and repressor of chromatin-binding protein.